Reading from the N-terminus, the 130-residue chain is MAGRGKTLGSGGAKKATSRSSKAGLQFPVGRIARFLKAGKYAERVGAGAPVYLAAVLEYLAAEVLELAGNAARDNKKTRIVPRHIQLAVRNDEELSKLLGDVTIANGGVMPNIHNLLLPKKAGASKPQED.

Gly residues predominate over residues 1-12 (MAGRGKTLGSGG). Residues 1–23 (MAGRGKTLGSGGAKKATSRSSKA) are disordered.

The protein belongs to the histone H2A family. In terms of assembly, the nucleosome is a histone octamer containing two molecules each of H2A, H2B, H3 and H4 assembled in one H3-H4 heterotetramer and two H2A-H2B heterodimers. The octamer wraps approximately 147 bp of DNA. Interacts with VIP1. Post-translationally, not ubiquitinated. Low level of expression, mainly in dividing tissues: floral buds, margins of newly emerging leaves, expanding leaves and the meristematic zone of root tips. Also expressed in many non-dividing cells of the elongation zone of the root.

It localises to the nucleus. It is found in the chromosome. Functionally, core component of nucleosome. Nucleosomes wrap and compact DNA into chromatin, limiting DNA accessibility to the cellular machineries which require DNA as a template. Histones thereby play a central role in transcription regulation, DNA repair, DNA replication and chromosomal stability. DNA accessibility is regulated via a complex set of post-translational modifications of histones, also called histone code, and nucleosome remodeling. Required for the T-DNA integration step of plant transformation by Agrobacterium. May play an important role in illegitimate recombination. In Arabidopsis thaliana (Mouse-ear cress), this protein is Histone H2A.6 (RAT5).